Here is a 143-residue protein sequence, read N- to C-terminus: Transcriptional regulator MraZ (143 aa).

SpoVT-AbrB domains lie at 5–47 and 76–119; these read EYRH…PQVE and ATEC…SKEL.

Belongs to the MraZ family. Forms oligomers.

The protein localises to the cytoplasm. Its subcellular location is the nucleoid. The chain is Transcriptional regulator MraZ from Halalkalibacterium halodurans (strain ATCC BAA-125 / DSM 18197 / FERM 7344 / JCM 9153 / C-125) (Bacillus halodurans).